The sequence spans 218 residues: Cell division protein SepF (218 aa).

The tract at residues 24-115 (EDVTASTDNV…IANRREQYQQ (92 aa)) is disordered. Residues 28–43 (ASTDNVIPRSQQSVRA) show a composition bias toward polar residues. Positions 47–63 (PKQEPRNNHVQQDHQAR) are enriched in basic and acidic residues.

It belongs to the SepF family. In terms of assembly, homodimer. Interacts with FtsZ.

Its subcellular location is the cytoplasm. Functionally, cell division protein that is part of the divisome complex and is recruited early to the Z-ring. Probably stimulates Z-ring formation, perhaps through the cross-linking of FtsZ protofilaments. Its function overlaps with FtsA. This is Cell division protein SepF from Streptococcus pyogenes serotype M4 (strain MGAS10750).